We begin with the raw amino-acid sequence, 209 residues long: Small ribosomal subunit protein uS5 (209 aa).

Residues 1 to 11 are compositionally biased toward polar residues; the sequence is MTQPNTQTTPN. The interval 1 to 55 is disordered; it reads MTQPNTQTTPNDVPAAAEGQQEQQQQQRRGGGRERRGGGRRGDRRGQERDSEWQE. Low complexity predominate over residues 18-28; the sequence is EGQQEQQQQQR. The segment covering 31–55 has biased composition (basic and acidic residues); it reads GGRERRGGGRRGDRRGQERDSEWQE. The S5 DRBM domain occupies 53-116; that stretch reads WQERVVQIRR…ADGKKHLVKV (64 aa).

It belongs to the universal ribosomal protein uS5 family. Part of the 30S ribosomal subunit. Contacts proteins S4 and S8.

Its function is as follows. With S4 and S12 plays an important role in translational accuracy. Functionally, located at the back of the 30S subunit body where it stabilizes the conformation of the head with respect to the body. This is Small ribosomal subunit protein uS5 from Prochlorococcus marinus (strain MIT 9313).